The sequence spans 325 residues: Probable cell division protein WhiA (325 aa).

The H-T-H motif DNA-binding region spans 273 to 306; that stretch reads SLEELGRLADPPMTKDAVAGRIRRLLSMADRKAK.

The protein belongs to the WhiA family.

Its function is as follows. Involved in cell division and chromosome segregation. The protein is Probable cell division protein WhiA of Mycobacterium bovis (strain BCG / Tokyo 172 / ATCC 35737 / TMC 1019).